The chain runs to 1349 residues: DNA-directed RNA polymerase subunit beta' (1349 aa).

Zn(2+)-binding residues include C219, C293, C300, and C303. The disordered stretch occupies residues 1298–1349 (LDSPTLGESGFGSRRAERSVLDDEDELIADEVVDDDDFEEEEEDDEDDFDDE). Positions 1319 to 1349 (DDEDELIADEVVDDDDFEEEEEDDEDDFDDE) are enriched in acidic residues.

It belongs to the RNA polymerase beta' chain family. RpoC2 subfamily. In terms of assembly, in cyanobacteria the RNAP catalytic core is composed of 2 alpha, 1 beta, 1 beta', 1 gamma and 1 omega subunit. When a sigma factor is associated with the core the holoenzyme is formed, which can initiate transcription. It depends on Zn(2+) as a cofactor.

It catalyses the reaction RNA(n) + a ribonucleoside 5'-triphosphate = RNA(n+1) + diphosphate. DNA-dependent RNA polymerase catalyzes the transcription of DNA into RNA using the four ribonucleoside triphosphates as substrates. The protein is DNA-directed RNA polymerase subunit beta' of Nostoc punctiforme (strain ATCC 29133 / PCC 73102).